A 158-amino-acid polypeptide reads, in one-letter code: PRA1 family protein 2 (158 aa).

The next 4 membrane-spanning stretches (helical) occupy residues 36–58 (NLNF…TLFT), 62–79 (LLVA…LFFV), 88–108 (FAVL…VIVI), and 113–133 (GLTL…HSAL).

Belongs to the PRA1 family.

It is found in the membrane. May act as a general Rab protein regulator. The polypeptide is PRA1 family protein 2 (prafB) (Dictyostelium discoideum (Social amoeba)).